The sequence spans 215 residues: Negative modulator of initiation of replication (215 aa).

Residues 71 to 93 (AETPKPSSEQEIRTPARKQSTQS) are disordered. Residues 181-187 (NTNSGRK) form an interaction with DNA region.

Belongs to the SeqA family. In terms of assembly, homodimer. Polymerizes to form helical filaments.

The protein localises to the cytoplasm. Functionally, negative regulator of replication initiation, which contributes to regulation of DNA replication and ensures that replication initiation occurs exactly once per chromosome per cell cycle. Binds to pairs of hemimethylated GATC sequences in the oriC region, thus preventing assembly of replication proteins and re-initiation at newly replicated origins. Repression is relieved when the region becomes fully methylated. In Mannheimia succiniciproducens (strain KCTC 0769BP / MBEL55E), this protein is Negative modulator of initiation of replication.